The sequence spans 646 residues: WW domain-containing adapter protein with coiled-coil (646 aa).

Residues 1-138 form a disordered region; sequence MVMYARKQQR…YDSADDWSEH (138 aa). Over residues 23 to 37 the composition is skewed to polar residues; that stretch reads QPFQALKYSSKSHPS. Residues 38 to 50 are compositionally biased toward basic and acidic residues; the sequence is SGDHRHEKMRDAA. Ser53 is subject to Phosphoserine. The segment covering 61–75 has biased composition (polar residues); it reads RSNSPENKYSDSTGH. The segment covering 103 to 122 has biased composition (low complexity); the sequence is NHSALHSSNSHSSNPSNNPS. One can recognise a WW domain in the interval 129–162; sequence YDSADDWSEHISSSGKKYYYNCRTEVSQWEKPKE. Ser131 and Ser142 each carry phosphoserine. Basic and acidic residues-rich tracts occupy residues 158–174 and 182–191; these read EKPK…KEAN and PKDRDYRREV. Disordered regions lie at residues 158–352 and 428–541; these read EKPK…PQST and TQAQ…TATV. Positions 211–225 are enriched in polar residues; it reads DASSLLPQNILSQTS. Ser225 carries the post-translational modification Phosphoserine. The span at 226–239 shows a compositional bias: basic and acidic residues; it reads RHNDKDYRLPRAET. Residues 252-267 show a composition bias toward low complexity; it reads PVVHPTATPSTVPSSP. The segment covering 284–300 has biased composition (polar residues); sequence GASTLSKLPTPTASLPA. Thr293 is modified (phosphothreonine). Lys302 bears the N6-acetyllysine mark. The span at 316–331 shows a compositional bias: polar residues; sequence SHSCTTPSTSSASGLN. The span at 332–351 shows a compositional bias: low complexity; that stretch reads PTSAPPTSASAVPVSPVPQS. Over residues 428–463 the composition is skewed to polar residues; sequence TQAQPSNQSPMSLTSDASSPRSYVSPRISTPQTNTV. Ser446 is modified (phosphoserine). A Phosphothreonine modification is found at Thr471. Polar residues predominate over residues 490–503; the sequence is VSHSATQQPVTADK. A phosphoserine mark is found at Ser511, Ser523, and Ser525. A compositionally biased stretch (low complexity) spans 511–524; sequence SPRSLQRLSSQRSP. Residues 528–541 are compositionally biased toward polar residues; sequence PNHTCSSNASTATV. The stretch at 617 to 643 forms a coiled coil; it reads QATLREQRILFLRQQIKELEKLKNQNS.

As to quaternary structure, interacts (via coiled coil domain) with RNF20, RNF40 and UBE2A. Interacts (via WW domain) with RNA polymerase II. Interacts with MTOR and other components of the MTOR pathway including RPTOR, RUVBL1, RUVBL2, TTI1 and TTI2. Phosphorylated on tyrosine residues.

It is found in the nucleus speckle. The protein localises to the nucleus. Acts as a linker between gene transcription and histone H2B monoubiquitination at 'Lys-120' (H2BK120ub1). Interacts with the RNA polymerase II transcriptional machinery via its WW domain and with RNF20-RNF40 via its coiled coil region, thereby linking and regulating H2BK120ub1 and gene transcription. Regulates the cell-cycle checkpoint activation in response to DNA damage. Positive regulator of amino acid starvation-induced autophagy. Also acts as a negative regulator of basal autophagy. Positively regulates MTOR activity by promoting, in an energy-dependent manner, the assembly of the TTT complex composed of TELO2, TTI1 and TTI2 and the RUVBL complex composed of RUVBL1 and RUVBL2 into the TTT-RUVBL complex. This leads to the dimerization of the mTORC1 complex and its subsequent activation. May negatively regulate the ubiquitin proteasome pathway. The polypeptide is WW domain-containing adapter protein with coiled-coil (Wac) (Mus musculus (Mouse)).